A 340-amino-acid polypeptide reads, in one-letter code: Quinic acid degradation cluster protein x (340 aa).

Mg(2+)-binding residues include E90, D115, L117, D118, and D262. Residue E90 coordinates substrate. Substrate contacts are provided by residues 117–120 (LDGT) and D262.

Belongs to the inositol monophosphatase superfamily.

In terms of biological role, part of the qa gene cluster that mediates the catabolism of quinic acid (QA) and as such, allows the use of QA as a sole carbon source. Its function within the pathway has not been determined yet but it probably plays a regulatory role. The qa cluster encodes 3 inducible enymes (qa-2, qa-3 and qa-4) catalyzing the first three reactions in the catabolism of quinic acid to protocatechuic acid (also known as 3,4-Dihydroxybenzoic acid). The chain is Quinic acid degradation cluster protein x from Neurospora crassa (strain ATCC 24698 / 74-OR23-1A / CBS 708.71 / DSM 1257 / FGSC 987).